Consider the following 276-residue polypeptide: SKA complex subunit 1 homolog (276 aa).

Residues 48 to 78 (VDVSLTAMEAQLQAVRRRLQEEREAFPKAKK) adopt a coiled-coil conformation.

The protein belongs to the SKA1 family.

This Oryza sativa subsp. indica (Rice) protein is SKA complex subunit 1 homolog.